Here is a 346-residue protein sequence, read N- to C-terminus: Methylthioribose-1-phosphate isomerase 1 (346 aa).

Residues 48–50 (RGA), Arg-91, and Gln-196 contribute to the substrate site. Catalysis depends on Asp-237, which acts as the Proton donor. Substrate is bound at residue 247–248 (NK).

This sequence belongs to the eIF-2B alpha/beta/delta subunits family. MtnA subfamily.

The enzyme catalyses 5-(methylsulfanyl)-alpha-D-ribose 1-phosphate = 5-(methylsulfanyl)-D-ribulose 1-phosphate. The protein operates within amino-acid biosynthesis; L-methionine biosynthesis via salvage pathway; L-methionine from S-methyl-5-thio-alpha-D-ribose 1-phosphate: step 1/6. In terms of biological role, catalyzes the interconversion of methylthioribose-1-phosphate (MTR-1-P) into methylthioribulose-1-phosphate (MTRu-1-P). The sequence is that of Methylthioribose-1-phosphate isomerase 1 from Pseudothermotoga lettingae (strain ATCC BAA-301 / DSM 14385 / NBRC 107922 / TMO) (Thermotoga lettingae).